Reading from the N-terminus, the 239-residue chain is Adapter protein MecA (239 aa).

A compositionally biased stretch (basic and acidic residues) spans 118–128; that stretch reads EQRTKEKEAQG. Positions 118–137 are disordered; it reads EQRTKEKEAQGSKRQKSSAR.

It belongs to the MecA family. As to quaternary structure, homodimer.

Enables the recognition and targeting of unfolded and aggregated proteins to the ClpC protease or to other proteins involved in proteolysis. The chain is Adapter protein MecA from Staphylococcus aureus (strain COL).